We begin with the raw amino-acid sequence, 149 residues long: Glucosamine 6-phosphate N-acetyltransferase (149 aa).

One can recognise an N-acetyltransferase domain in the interval 7–149 (YTFRKLKLTD…DGGVEMVCRF (143 aa)). Residues Thr-29, 76–79 (KLIH), and 88–90 (EDI) contribute to the substrate site. Residues 90–92 (ISV) and 98–103 (GKKLGY) contribute to the acetyl-CoA site. Substrate is bound by residues 119–120 (YK) and Asp-124. 133–135 (YEK) serves as a coordination point for acetyl-CoA. Arg-148 provides a ligand contact to substrate.

This sequence belongs to the acetyltransferase family. GNA1 subfamily.

It carries out the reaction D-glucosamine 6-phosphate + acetyl-CoA = N-acetyl-D-glucosamine 6-phosphate + CoA + H(+). It participates in nucleotide-sugar biosynthesis; UDP-N-acetyl-alpha-D-glucosamine biosynthesis; N-acetyl-alpha-D-glucosamine 1-phosphate from alpha-D-glucosamine 6-phosphate (route I): step 1/2. This is Glucosamine 6-phosphate N-acetyltransferase (GNA1) from Candida albicans (Yeast).